The sequence spans 686 residues: MKPSWLQCHKVTSAGGLGGPLPGSSPARGASAALRALVVPGPRGGLGGRGCRALSSGSGSEYKTHFAASVTDPERFWGKAAEQISWYKPWTKTLENKHSPSTSWFVEGMLNVCYNAVDRHIENGKGDKIAIIYDSPVTNTKATFTYKEVLEQVSKLAGVLVKHGIKKGDTVVIYMPMIPQAMYTMLACARIGAIHSLIFGGFASKELSSRIDHVKPKVVVTASFGIEPGRRVEYVPLVEEALKIGQHKPDKILIYNRPNMEAVPLAPGRDLDWDEEMAKAQSHDCVPVLSEHPLYILYTSGTTGLPKGVIRPTGGYAVMLNWSMSSIYGLQPGEVWWAASDLGWVVGHSYICYGPLLHGNTTVLYEGKPVGTPDAGAYFRVLAEHGVAALFTAPTAIRAIRQQDPGAALGKQYSLTRFKTLFVAGERCDVETLEWSKNVFRVPVLDHWWQTETGSPITASCVGLGNSKTPPPGQAGKSVPGYNVMILDDNMQKLKARCLGNIVVKLPLPPGAFSGLWKNQEAFKHLYFEKFPGYYDTMDAGYMDEEGYVYVMSRVDDVINVAGHRISAGAIEESILSHGTVADCAVVGKEDPLKGHVPLALCVLRKDINATEEQVLEEIVKHVRQNIGPVAAFRNAVFVKQLPKTRSGKIPRSALSAIVNGKPYKITSTIEDPSIFGHVEEMLKQA.

A mitochondrion-targeting transit peptide spans 1-29 (MKPSWLQCHKVTSAGGLGGPLPGSSPARG). Residue 227–230 (EPGR) coordinates CoA. ATP contacts are provided by residues 425–427 (GER) and 446–451 (DHWWQT). An N6-succinyllysine modification is found at lysine 518. Lysine 524 is modified (N6-acetyllysine). 3 residues coordinate ATP: aspartate 539, arginine 554, and arginine 565. Arginine 624 provides a ligand contact to CoA.

Belongs to the ATP-dependent AMP-binding enzyme family.

The protein localises to the mitochondrion matrix. It carries out the reaction acetate + ATP + CoA = acetyl-CoA + AMP + diphosphate. The catalysed reaction is propanoate + ATP + CoA = propanoyl-CoA + AMP + diphosphate. The enzyme catalyses butanoate + ATP + CoA = butanoyl-CoA + AMP + diphosphate. In terms of biological role, catalyzes the synthesis of acetyl-CoA from short-chain fatty acids. Propionate is the preferred substrate but can also utilize acetate and butyrate with a much lower affinity. The chain is Acyl-CoA synthetase short-chain family member 3, mitochondrial (ACSS3) from Pongo abelii (Sumatran orangutan).